We begin with the raw amino-acid sequence, 247 residues long: 2,3-bisphosphoglycerate-dependent phosphoglycerate mutase (247 aa).

Residues 8–15, 21–22, arginine 60, 87–90, lysine 98, 114–115, and 183–184 contribute to the substrate site; these read RHGESTWN, TG, ERHY, RR, and GN. Histidine 9 serves as the catalytic Tele-phosphohistidine intermediate. Catalysis depends on glutamate 87, which acts as the Proton donor/acceptor.

This sequence belongs to the phosphoglycerate mutase family. BPG-dependent PGAM subfamily. Homodimer.

The catalysed reaction is (2R)-2-phosphoglycerate = (2R)-3-phosphoglycerate. It functions in the pathway carbohydrate degradation; glycolysis; pyruvate from D-glyceraldehyde 3-phosphate: step 3/5. Its function is as follows. Catalyzes the interconversion of 2-phosphoglycerate and 3-phosphoglycerate. The polypeptide is 2,3-bisphosphoglycerate-dependent phosphoglycerate mutase (Acidovorax sp. (strain JS42)).